The chain runs to 153 residues: UPF0266 membrane protein SG1324 (153 aa).

3 helical membrane passes run 6–26 (IGLV…EFIV), 46–66 (LDGL…ITTD), and 68–88 (KVMT…LAYI).

Belongs to the UPF0266 family.

The protein localises to the cell inner membrane. This is UPF0266 membrane protein SG1324 from Sodalis glossinidius (strain morsitans).